Here is an 82-residue protein sequence, read N- to C-terminus: Small ribosomal subunit protein bS16 (82 aa).

This sequence belongs to the bacterial ribosomal protein bS16 family.

The polypeptide is Small ribosomal subunit protein bS16 (Histophilus somni (strain 2336) (Haemophilus somnus)).